We begin with the raw amino-acid sequence, 611 residues long: Adenosylhomocysteinase 3 (611 aa).

3 stretches are compositionally biased toward low complexity: residues 1–14 (MSVQ…AAKV), 36–57 (AAVG…APAA), and 68–81 (GPAA…GKVP). The interval 1–184 (MSVQVVSAAA…KQQKNSKGSS (184 aa)) is disordered. Ser2 carries the post-translational modification N-acetylserine. Positions 2–109 (SVQVVSAAAA…DGGEALVSPD (108 aa)) are LISN domain, inhibits interaction with ITPR1. Residue Ser107 is modified to Phosphoserine. The segment covering 135-144 (RPTKIGRRSL) has biased composition (basic residues). Low complexity predominate over residues 145 to 164 (SRSISQSSTDSYSSAASYTD). 4 positions are modified to phosphoserine: Ser149, Ser152, Ser155, and Ser158. Residues Thr236, Asp310, and Glu335 each coordinate substrate. Residue 336–338 (SVT) participates in NAD(+) binding. Substrate-binding residues include Lys365 and Asp369. Residues Asn370, 401–406 (GEVGKG), Glu422, Asn457, 478–479 (MG), and Asn525 contribute to the NAD(+) site.

This sequence belongs to the adenosylhomocysteinase family. In terms of assembly, homotetramer. Forms heteromultimers with AHCYL1 (via the C-terminal region). Interacts with ITPR1; with lower affinity than AHCYL1 and maybe via ITPR1. Interacts with SLC4A4. Interacts with ZCCHC4. It depends on NAD(+) as a cofactor. Phosphorylated during neuronal differentiation at the LISN domain.

It is found in the cytoplasm. The protein resides in the microsome. The catalysed reaction is S-adenosyl-L-homocysteine + H2O = L-homocysteine + adenosine. Its pathway is amino-acid biosynthesis; L-homocysteine biosynthesis; L-homocysteine from S-adenosyl-L-homocysteine: step 1/1. Functionally, may regulate the electrogenic sodium/bicarbonate cotransporter SLC4A4 activity and Mg(2+)-sensitivity. On the contrary of its homolog AHCYL1, does not regulate ITPR1 sensitivity to inositol 1,4,5-trisphosphate. In Homo sapiens (Human), this protein is Adenosylhomocysteinase 3 (AHCYL2).